The following is a 1324-amino-acid chain: Mediator of RNA polymerase II transcription subunit 13 (1324 aa).

6 disordered regions span residues 296–346 (ESGV…PPEA), 386–455 (FFDD…ATTA), 535–590 (GRFF…EPEI), 607–631 (HDDK…SNNS), 694–816 (KGGQ…VPSA), and 1151–1198 (TGSD…PDIY). Polar residues predominate over residues 298–331 (GVNTNESTAAQPQPAQNGTNSMAPAAGTTNATTQ). Over residues 398–407 (DGDNDNGNDN) the composition is skewed to acidic residues. Basic and acidic residues predominate over residues 408 to 442 (DNDKADAMDVDVKEEAKKEEMIKKETKEEVPVKEE). A compositionally biased stretch (low complexity) spans 546–566 (DNEGSSDNTGDSSDSGDGSES). Basic and acidic residues-rich tracts occupy residues 567-578 (VPRDVKRQKVDE) and 607-617 (HDDKPAKKIDS). Composition is skewed to low complexity over residues 618 to 631 (SNDT…SNNS) and 724 to 743 (SNAS…QMGA). Residues 750–784 (LSPSRGATPQPEGSSPETRPSNWTPGITSQVNSAA) show a composition bias toward polar residues. Low complexity-rich tracts occupy residues 785–816 (SSPV…VPSA) and 1172–1184 (TGAA…GSAP).

Belongs to the Mediator complex subunit 13 family. As to quaternary structure, component of the SRB8-11 complex, which itself associates with the Mediator complex.

The protein resides in the nucleus. In terms of biological role, component of the SRB8-11 complex. The SRB8-11 complex is a regulatory module of the Mediator complex which is itself involved in regulation of basal and activated RNA polymerase II-dependent transcription. The SRB8-11 complex may be involved in the transcriptional repression of a subset of genes regulated by Mediator. It may inhibit the association of the Mediator complex with RNA polymerase II to form the holoenzyme complex. This chain is Mediator of RNA polymerase II transcription subunit 13 (SSN2), found in Yarrowia lipolytica (strain CLIB 122 / E 150) (Yeast).